A 138-amino-acid polypeptide reads, in one-letter code: Basic phospholipase A2 homolog Ts-K49b (138 aa).

An N-terminal signal peptide occupies residues 1 to 16 (MRTLWIMAVLLVGVEG). 6 disulfide bridges follow: Cys42-Cys131, Cys44-Cys60, Cys65-Cys138, Cys66-Cys104, Cys73-Cys97, and Cys91-Cys102. Residues 121–133 (KKKKINLKLFCKK) form an important for membrane-damaging activities in eukaryotes and bacteria; heparin-binding region.

In terms of tissue distribution, expressed by the venom gland.

It localises to the secreted. Functionally, snake venom phospholipase A2 homolog that lacks catalytic activity. It shows myotoxic and weak anticoagulant activities. A model of myotoxic mechanism has been proposed: an apo Lys49-PLA2 is activated by the entrance of a hydrophobic molecule (e.g. fatty acid) at the hydrophobic channel of the protein leading to a reorientation of a monomer. This reorientation causes a transition between 'inactive' to 'active' states, causing alignment of C-terminal and membrane-docking sites (MDoS) side-by-side and putting the membrane-disruption sites (MDiS) in the same plane, exposed to solvent and in a symmetric position for both monomers. The MDoS region stabilizes the toxin on membrane by the interaction of charged residues with phospholipid head groups. Subsequently, the MDiS region destabilizes the membrane with penetration of hydrophobic residues. This insertion causes a disorganization of the membrane, allowing an uncontrolled influx of ions (i.e. calcium and sodium), and eventually triggering irreversible intracellular alterations and cell death. This is Basic phospholipase A2 homolog Ts-K49b from Trimeresurus stejnegeri (Chinese green tree viper).